A 265-amino-acid polypeptide reads, in one-letter code: Tryptophan synthase alpha chain (265 aa).

Catalysis depends on proton acceptor residues glutamate 49 and aspartate 60.

This sequence belongs to the TrpA family. As to quaternary structure, tetramer of two alpha and two beta chains.

It carries out the reaction (1S,2R)-1-C-(indol-3-yl)glycerol 3-phosphate + L-serine = D-glyceraldehyde 3-phosphate + L-tryptophan + H2O. It functions in the pathway amino-acid biosynthesis; L-tryptophan biosynthesis; L-tryptophan from chorismate: step 5/5. Its function is as follows. The alpha subunit is responsible for the aldol cleavage of indoleglycerol phosphate to indole and glyceraldehyde 3-phosphate. The chain is Tryptophan synthase alpha chain from Cupriavidus taiwanensis (strain DSM 17343 / BCRC 17206 / CCUG 44338 / CIP 107171 / LMG 19424 / R1) (Ralstonia taiwanensis (strain LMG 19424)).